We begin with the raw amino-acid sequence, 1811 residues long: Protein virilizer homolog (1811 aa).

N-acetylalanine is present on Ala2. The interval 132 to 302 (ISHDRDSPPP…EGDDGYEQIS (171 aa)) is disordered. A phosphoserine mark is found at Ser133 and Ser138. Positions 139-152 (PPPPPPPPPPPQPQ) are enriched in pro residues. Basic and acidic residues predominate over residues 160–169 (KHADGEKEDQ). At Ser173 the chain carries Phosphoserine. The span at 174 to 190 (PPRPQPRGPRTPPGPPP) shows a compositional bias: pro residues. Thr184 carries the post-translational modification Phosphothreonine. The residue at position 222 (Ser222) is a Phosphoserine. Positions 224–233 (DRNSVPQEGQ) are enriched in polar residues. Composition is skewed to acidic residues over residues 234-267 (YSDE…DEDD) and 274-302 (IPDD…EQIS). Residue Tyr913 is modified to Phosphotyrosine. Ser1578 carries the post-translational modification Phosphoserine. 2 disordered regions span residues 1615–1634 (HVVP…GIRP) and 1662–1811 (KEVV…SFTR). The span at 1688-1697 (GFSGNRGGRG) shows a compositional bias: gly residues. Thr1707 carries the phosphothreonine modification. Arg1722 carries the omega-N-methylarginine modification. The span at 1722–1747 (RGSSWSAQNTPRGNYNESRGGQSNFN) shows a compositional bias: polar residues. Arg1740 is subject to Asymmetric dimethylarginine; alternate. At Arg1740 the chain carries Omega-N-methylarginine; alternate. Asymmetric dimethylarginine occurs at positions 1772, 1774, and 1792. The span at 1787–1801 (GSGGSRGKFVSGGSG) shows a compositional bias: gly residues. Basic residues predominate over residues 1802-1811 (RGRHVRSFTR).

This sequence belongs to the vir family. In terms of assembly, component of the WMM complex, a N6-methyltransferase complex composed of a catalytic subcomplex, named MAC, and of an associated subcomplex, named MACOM. The MAC subcomplex is composed of METTL3 and METTL14. The MACOM subcomplex is composed of WTAP, ZC3H13, CBLL1/HAKAI, VIRMA, and, in some cases of RBM15 (RBM15 or RBM15B). Interacts with WTAP. Also a component of a MACOM-like complex, named WTAP complex, composed of WTAP, ZC3H13, CBLL1, VIRMA, RBM15, BCLAF1 and THRAP3. Interacts with NUDT21 and CPSF6.

Its subcellular location is the nucleus speckle. The protein resides in the nucleus. The protein localises to the nucleoplasm. It localises to the cytoplasm. Functionally, associated component of the WMM complex, a complex that mediates N6-methyladenosine (m6A) methylation of RNAs, a modification that plays a role in the efficiency of mRNA splicing and RNA processing. Acts as a key regulator of m6A methylation by promoting m6A methylation of mRNAs in the 3'-UTR near the stop codon: recruits the catalytic core components METTL3 and METTL14, thereby guiding m6A methylation at specific sites. Required for mRNA polyadenylation via its role in selective m6A methylation: m6A methylation of mRNAs in the 3'-UTR near the stop codon correlating with alternative polyadenylation (APA). This chain is Protein virilizer homolog, found in Mus musculus (Mouse).